A 370-amino-acid polypeptide reads, in one-letter code: Myomodulin neuropeptides 1 (370 aa).

The first 18 residues, Met-1–Gln-18, serve as a signal peptide directing secretion. A propeptide spanning residues Gly-19–Ala-50 is cleaved from the precursor. Residues Gln-28 to Ser-40 show a composition bias toward low complexity. Residues Gln-28–Arg-52 are disordered. Residues Leu-60 and Leu-69 each carry the leucine amide modification. A propeptide spanning residues Gly-73–Glu-190 is cleaved from the precursor. 2 positions are modified to leucine amide: Leu-199 and Leu-209. Over residues Gly-210–Glu-226 the composition is skewed to basic and acidic residues. The interval Gly-210–Asp-230 is disordered. The propeptide occupies Glu-213–Ile-237. Leu-246, Leu-256, Leu-266, Leu-276, Leu-286, Leu-296, Leu-306, Leu-316, Leu-326, Leu-336, and Leu-346 each carry leucine amide. Positions Leu-344 to Gln-370 are disordered. Positions Gly-347–Ser-358 are enriched in basic and acidic residues. Residues Asp-350–Glu-355 constitute a propeptide that is removed on maturation. Leu-364 carries the leucine amide modification. The propeptide occupies Ser-368–Gln-370.

As to expression, expressed in all ganglia of the CNS, but only in a subset of neurons including L10 in the abdominal ganglion and B16 in the buccal ganglion.

It localises to the secreted. Functionally, exogenous application of myomodulins potentiates ARC muscle contraction. In Aplysia californica (California sea hare), this protein is Myomodulin neuropeptides 1 (MYOMOD1).